A 304-amino-acid polypeptide reads, in one-letter code: N-acetylmuramic acid 6-phosphate etherase (304 aa).

The SIS domain occupies 62–225 (IVQAFQNGGR…TTASMVMIGK (164 aa)). Glu-90 (proton donor) is an active-site residue. Glu-121 is a catalytic residue.

Belongs to the GCKR-like family. MurNAc-6-P etherase subfamily. In terms of assembly, homodimer.

It catalyses the reaction N-acetyl-D-muramate 6-phosphate + H2O = N-acetyl-D-glucosamine 6-phosphate + (R)-lactate. It functions in the pathway amino-sugar metabolism; 1,6-anhydro-N-acetylmuramate degradation. It participates in amino-sugar metabolism; N-acetylmuramate degradation. The protein operates within cell wall biogenesis; peptidoglycan recycling. Functionally, specifically catalyzes the cleavage of the D-lactyl ether substituent of MurNAc 6-phosphate, producing GlcNAc 6-phosphate and D-lactate. Together with AnmK, is also required for the utilization of anhydro-N-acetylmuramic acid (anhMurNAc) either imported from the medium or derived from its own cell wall murein, and thus plays a role in cell wall recycling. This Actinobacillus pleuropneumoniae serotype 5b (strain L20) protein is N-acetylmuramic acid 6-phosphate etherase.